The chain runs to 200 residues: Lipopolysaccharide core heptose(II)-phosphate phosphatase (200 aa).

The signal sequence occupies residues 1–25 (MLAFCRSSLKSKKYFIILLALAAIA).

It belongs to the phosphoglycerate mutase family. Ais subfamily.

The protein resides in the periplasm. The protein operates within bacterial outer membrane biogenesis; lipopolysaccharide metabolism. Catalyzes the dephosphorylation of heptose(II) of the outer membrane lipopolysaccharide core. This Escherichia coli (strain SE11) protein is Lipopolysaccharide core heptose(II)-phosphate phosphatase.